We begin with the raw amino-acid sequence, 443 residues long: Transcriptional adapter 2-alpha (443 aa).

Phosphoserine; in variant Ser-6 is present on Pro-6. The ZZ-type zinc-finger motif lies at 12-69; that stretch reads SDKPPCRGCSSYLMEPYIKCAECGPPPFFLCLQCFTRGFEYKKHQSDHTYEIMTSDFP. 8 residues coordinate Zn(2+): Cys-17, Cys-20, Cys-31, Cys-34, Cys-42, Cys-45, His-55, and His-59. The 53-residue stretch at 70–122 folds into the SANT domain; that stretch reads VLDPSWTAQEEMALLEAVMDCGFGNWQDVANQMCTKTKEECEKHYMKHFINNP. Residues Lys-132 and Lys-138 each participate in a glycyl lysine isopeptide (Lys-Gly) (interchain with G-Cter in SUMO2) cross-link. The disordered stretch occupies residues 348-372; it reads SPSIPMASNSGRRSAPPLNLTGLPG. The SWIRM domain occupies 356 to 443; sequence NSGRRSAPPL…LIREGYITKG (88 aa). The DNA-binding element occupies 426–435; the sequence is KTRKIYDFLI.

Interacts with GCN5 and NR3C1. Associated with the P/CAF protein in the PCAF complex. Component of the PCAF complex, at least composed of TADA2L/ADA2, TADA3L/ADA3, TAF5L/PAF65-beta, TAF6L/PAF65-alpha, TAF10/TAFII30, TAF12/TAFII20, TAF9/TAFII31 and TRRAP. Component of the ADA2A-containing complex (ATAC), composed of KAT14, KAT2A, TADA2L, TADA3L, ZZ3, MBIP, WDR5, YEATS2, CCDC101 and DR1. Interacts with CCDC134. As to expression, expressed in all tissues, but most abundantly in testis.

The protein localises to the nucleus. It is found in the chromosome. Component of the ATAC complex, a complex with histone acetyltransferase activity on histones H3 and H4. Required for the function of some acidic activation domains, which activate transcription from a distant site. Binds double-stranded DNA. Binds dinucleosomes, probably at the linker region between neighboring nucleosomes. Plays a role in chromatin remodeling. May promote TP53/p53 'Lys-321' acetylation, leading to reduced TP53 stability and transcriptional activity. May also promote XRCC6 acetylation thus facilitating cell apoptosis in response to DNA damage. This chain is Transcriptional adapter 2-alpha (TADA2A), found in Homo sapiens (Human).